The chain runs to 75 residues: uncharacterized protein (75 aa).

A LysM domain is found at E29–I72.

This is an uncharacterized protein from Bacillus subtilis (strain 168).